A 309-amino-acid chain; its full sequence is MEQLLGIKLGCLFALLALTLGCGLTPICFKWFQIDAARGHHRLVLRLLGCISAGVFLGAGFMHMTAEALEEIESQIQKFMVQNRSASERNSSGDADSAHMEYPYGELIISLGFFFVFFLESLALQCCPGAAGGSTVQDEEWGGAHIFELHSHGHLPSPSKGPLRALVLLLSLSFHSVFEGLAVGLQPTVAATVQLCLAVLAHKGLVVFGVGMRLVHLGTSSRWAVFSILLLALMSPLGLAVGLAVTGGDSEGGRGLAQAVLEGVAAGTFLYVTFLEILPRELASPEAPLAKWSCVAAGFAFMAFIALWA.

At 1–8 (MEQLLGIK) the chain is on the extracellular side. A helical transmembrane segment spans residues 9–29 (LGCLFALLALTLGCGLTPICF). The Cytoplasmic segment spans residues 30–46 (KWFQIDAARGHHRLVLR). Residues 47–67 (LLGCISAGVFLGAGFMHMTAE) traverse the membrane as a helical segment. Residues 68–103 (ALEEIESQIQKFMVQNRSASERNSSGDADSAHMEYP) are Extracellular-facing. The chain crosses the membrane as a helical span at residues 104 to 124 (YGELIISLGFFFVFFLESLAL). Over 125–164 (QCCPGAAGGSTVQDEEWGGAHIFELHSHGHLPSPSKGPLR) the chain is Cytoplasmic. The helical transmembrane segment at 165 to 185 (ALVLLLSLSFHSVFEGLAVGL) threads the bilayer. Zn(2+)-binding residues include His175 and Glu179. Residues 186-189 (QPTV) are Extracellular-facing. The chain crosses the membrane as a helical span at residues 190–210 (AATVQLCLAVLAHKGLVVFGV). His202 serves as a coordination point for Zn(2+). Residues 211–224 (GMRLVHLGTSSRWA) are Cytoplasmic-facing. The chain crosses the membrane as a helical span at residues 225-245 (VFSILLLALMSPLGLAVGLAV). Topologically, residues 246–258 (TGGDSEGGRGLAQ) are extracellular. A helical transmembrane segment spans residues 259–279 (AVLEGVAAGTFLYVTFLEILP). Zn(2+) is bound at residue Glu276. The Cytoplasmic segment spans residues 280 to 288 (RELASPEAP). Residues 289-309 (LAKWSCVAAGFAFMAFIALWA) form a helical membrane-spanning segment.

This sequence belongs to the ZIP transporter (TC 2.A.5) family. Expressed only in prostate and uterine epithelial cells.

It is found in the cell membrane. The catalysed reaction is Zn(2+)(in) = Zn(2+)(out). The enzyme catalyses Cd(2+)(in) = Cd(2+)(out). Its activity is regulated as follows. Activity is increased at acidic pH (6.5). Inhibited in the presence of high extracellular K(+). Its function is as follows. Transporter for the divalent cation Zn(2+). Mediates the influx of Zn(2+) into cells from extracellular space. The Zn(2+) uniporter activity is independent of H(+)-driving force, but is modulated by extracellular pH and membrane potential. Also transports other divalent cations Zn(2+), Cd2(+), Cu2(+), Co2(+) in the order of decreasing affinity, respectively. In the skin, aids in the differentiation of keratinocytes in the epidermis. The chain is Zinc transporter ZIP2 from Homo sapiens (Human).